A 1017-amino-acid polypeptide reads, in one-letter code: GPI ethanolamine phosphate transferase 3 (1017 aa).

A helical transmembrane segment spans residues 34–54; sequence FYIILLVFIAILQFISIAFFT. N66, N71, N100, N182, and N203 each carry an N-linked (GlcNAc...) asparagine glycan. The chain crosses the membrane as a helical span at residues 347–367; sequence VSSLALLMGQPIPFNNLGWPI. Residue N411 is glycosylated (N-linked (GlcNAc...) asparagine). The next 6 helical transmembrane spans lie at 457–477, 484–504, 515–535, 558–578, 582–602, and 644–664; these read LLAT…SIVV, FVPG…GIFY, FWGT…ITIF, IAVM…FTIW, IVAF…VFLP, and LGGY…MITI. N-linked (GlcNAc...) asparagine glycosylation is found at N681 and N682. A helical membrane pass occupies residues 685–705; that stretch reads WWVLGLCFLMIFILPACITGY. Residue N707 is glycosylated (N-linked (GlcNAc...) asparagine). Residues 715 to 735 form a helical membrane-spanning segment; the sequence is AAPIWINVFLKGILGLNFVYW. N-linked (GlcNAc...) asparagine glycosylation is present at N742. 6 helical membrane-spanning segments follow: residues 765–785, 806–826, 829–849, 903–923, 947–967, and 981–1001; these read IIAG…PLCI, NIYG…ILLF, PLAQ…LEII, IAII…VALL, GILL…VTHF, and FIFA…GTIA.

It belongs to the PIGG/PIGN/PIGO family. PIGO subfamily. Glycosylated.

Its subcellular location is the endoplasmic reticulum membrane. It functions in the pathway glycolipid biosynthesis; glycosylphosphatidylinositol-anchor biosynthesis. Its function is as follows. Involved in glycosylphosphatidylinositol-anchor biosynthesis. Transfers ethanolamine phosphate to the GPI third mannose which links the GPI-anchor to the C-terminus of the proteins by an amide bond. Involved in cell wall biosynthesis. This Saccharomyces cerevisiae (strain ATCC 204508 / S288c) (Baker's yeast) protein is GPI ethanolamine phosphate transferase 3 (GPI13).